We begin with the raw amino-acid sequence, 513 residues long: ATP synthase subunit alpha (513 aa).

169 to 176 (GDRQIGKT) is an ATP binding site.

Belongs to the ATPase alpha/beta chains family. F-type ATPases have 2 components, CF(1) - the catalytic core - and CF(0) - the membrane proton channel. CF(1) has five subunits: alpha(3), beta(3), gamma(1), delta(1), epsilon(1). CF(0) has three main subunits: a(1), b(2) and c(9-12). The alpha and beta chains form an alternating ring which encloses part of the gamma chain. CF(1) is attached to CF(0) by a central stalk formed by the gamma and epsilon chains, while a peripheral stalk is formed by the delta and b chains.

The protein localises to the cell inner membrane. It carries out the reaction ATP + H2O + 4 H(+)(in) = ADP + phosphate + 5 H(+)(out). In terms of biological role, produces ATP from ADP in the presence of a proton gradient across the membrane. The alpha chain is a regulatory subunit. This is ATP synthase subunit alpha from Shewanella woodyi (strain ATCC 51908 / MS32).